The chain runs to 974 residues: Translation initiation factor IF-2 (974 aa).

Residues 31 to 376 form a disordered region; sequence FVKSASSTVE…APAVGGVRLP (346 aa). Over residues 52 to 68 the composition is skewed to low complexity; the sequence is PSAKSADSAARPAAKPG. Residues 83-96 are compositionally biased toward pro residues; the sequence is GPRPGPKPAAPAPA. Residues 97-133 show a composition bias toward low complexity; the sequence is APAAAAPAATPAAQAPAPAAPAASTATPAAPASNAPK. Positions 134-147 are enriched in pro residues; sequence PGRPTPAAPAPAAP. Composition is skewed to low complexity over residues 148 to 166 and 179 to 191; these read AAPA…STGA and RVGN…APAE. Pro residues-rich tracts occupy residues 195–210 and 253–266; these read PRPA…PRPA and RPSP…PNPG. Over residues 267 to 277 the composition is skewed to low complexity; it reads AMPARSARPAP. The segment covering 279 to 332 has biased composition (gly residues); it reads GRPGRPGGAPGGRPGGGGGGYRGGGAPGAGAGAPGGGAPAGGFRGRPGGGGRPG. Residues 349 to 358 show a composition bias toward basic residues; it reads RRGRKSKRQK. In terms of domain architecture, tr-type G spans 470–641; sequence SRPPVVTVMG…AVLLTADAAL (172 aa). Residues 479–486 are G1; sequence GHVDHGKT. 479-486 is a binding site for GTP; that stretch reads GHVDHGKT. The interval 504-508 is G2; that stretch reads GITQH. A G3 region spans residues 529 to 532; sequence DTPG. GTP contacts are provided by residues 529–533 and 583–586; these read DTPGH and NKID. The tract at residues 583-586 is G4; sequence NKID. The segment at 619-621 is G5; the sequence is SAK.

This sequence belongs to the TRAFAC class translation factor GTPase superfamily. Classic translation factor GTPase family. IF-2 subfamily.

It is found in the cytoplasm. Functionally, one of the essential components for the initiation of protein synthesis. Protects formylmethionyl-tRNA from spontaneous hydrolysis and promotes its binding to the 30S ribosomal subunits. Also involved in the hydrolysis of GTP during the formation of the 70S ribosomal complex. This chain is Translation initiation factor IF-2, found in Rhodococcus opacus (strain B4).